The chain runs to 432 residues: UDP-N-acetylmuramate--L-alanine ligase (432 aa).

Position 108 to 114 (108 to 114) interacts with ATP; it reads GAHGKTS.

Belongs to the MurCDEF family.

It is found in the cytoplasm. It carries out the reaction UDP-N-acetyl-alpha-D-muramate + L-alanine + ATP = UDP-N-acetyl-alpha-D-muramoyl-L-alanine + ADP + phosphate + H(+). Its pathway is cell wall biogenesis; peptidoglycan biosynthesis. In terms of biological role, cell wall formation. The sequence is that of UDP-N-acetylmuramate--L-alanine ligase from Bacillus licheniformis (strain ATCC 14580 / DSM 13 / JCM 2505 / CCUG 7422 / NBRC 12200 / NCIMB 9375 / NCTC 10341 / NRRL NRS-1264 / Gibson 46).